The sequence spans 666 residues: Putative cysteine-rich receptor-like protein kinase 20 (666 aa).

An N-terminal signal peptide occupies residues 1–23; it reads MSSLICFIFLFLFSFITSFTASA. Residues 24–264 are Extracellular-facing; that stretch reads QNPFYLYHNC…PRPGKGGNSS (241 aa). Gnk2-homologous domains are found at residues 27–131 and 137–241; these read FYLY…NRNI and TDGG…NYEF. N-linked (GlcNAc...) asparagine glycans are attached at residues asparagine 32, asparagine 42, asparagine 60, asparagine 69, and asparagine 103. N-linked (GlcNAc...) asparagine glycosylation is present at asparagine 262. The chain crosses the membrane as a helical span at residues 265 to 285; it reads VIVIAVVVPITVLFLLFVAFF. At 286–666 the chain is on the cytoplasmic side; the sequence is SVRRAKRKKT…EASITSVAPR (381 aa). A Protein kinase domain is found at 344-623; the sequence is FLPINKLGQG…QMLTTSSIAL (280 aa). Residues 350-358 and lysine 372 contribute to the ATP site; that span reads LGQGGFGEV. Phosphotyrosine is present on tyrosine 417. Aspartate 469 acts as the Proton acceptor in catalysis. Residue threonine 509 is modified to Phosphothreonine. The residue at position 517 (tyrosine 517) is a Phosphotyrosine.

It belongs to the protein kinase superfamily. Ser/Thr protein kinase family. CRK subfamily.

The protein localises to the membrane. The catalysed reaction is L-seryl-[protein] + ATP = O-phospho-L-seryl-[protein] + ADP + H(+). It catalyses the reaction L-threonyl-[protein] + ATP = O-phospho-L-threonyl-[protein] + ADP + H(+). The chain is Putative cysteine-rich receptor-like protein kinase 20 (CRK20) from Arabidopsis thaliana (Mouse-ear cress).